Here is a 1002-residue protein sequence, read N- to C-terminus: UPF0182 protein Mvan_1814 (1002 aa).

7 consecutive transmembrane segments (helical) span residues 16–36, 61–81, 112–132, 174–194, 209–229, 258–278, and 286–306; these read VMIAVALAVVVLLLLGPRLVD, LLLFLAVAVVFGAVVFAAMAL, LVGIGVPVAVGLLAGLIAQNY, FAATFLAFIANLLGHYLFGGI, IQLIALVGFLMLLKAVAYWLD, KLILMVIAVICAAAVFSAIVL, and IGVVLLLLSSLIVGAGWPLVV. Positions 891–958 are disordered; that stretch reads LFGPGADATA…TGPTQLSAGK (68 aa). Low complexity predominate over residues 893 to 923; that stretch reads GPGADATATGPAATEPPAGQAPQPQGNNQPP. Pro residues predominate over residues 937-950; it reads PQQPEVPVAVPPTG.

This sequence belongs to the UPF0182 family.

It is found in the cell membrane. The polypeptide is UPF0182 protein Mvan_1814 (Mycolicibacterium vanbaalenii (strain DSM 7251 / JCM 13017 / BCRC 16820 / KCTC 9966 / NRRL B-24157 / PYR-1) (Mycobacterium vanbaalenii)).